Here is an 83-residue protein sequence, read N- to C-terminus: Small ribosomal subunit protein bS16 (83 aa).

This sequence belongs to the bacterial ribosomal protein bS16 family.

In Pseudomonas aeruginosa (strain UCBPP-PA14), this protein is Small ribosomal subunit protein bS16.